We begin with the raw amino-acid sequence, 775 residues long: Homoaconitase, mitochondrial (775 aa).

A mitochondrion-targeting transit peptide spans 1 to 29; it reads MQSRLMPSGGPGRRWAFLRVPSTPQRRAF. Residues cysteine 392, cysteine 461, and cysteine 464 each coordinate [4Fe-4S] cluster.

It belongs to the aconitase/IPM isomerase family. It depends on [4Fe-4S] cluster as a cofactor.

The protein resides in the mitochondrion. It catalyses the reaction (2R,3S)-homoisocitrate = cis-homoaconitate + H2O. It functions in the pathway amino-acid biosynthesis; L-lysine biosynthesis via AAA pathway; L-alpha-aminoadipate from 2-oxoglutarate: step 3/5. Catalyzes the reversible hydration of cis-homoaconitate to (2R,3S)-homoisocitrate, a step in the alpha-aminoadipate pathway for lysine biosynthesis. This Aspergillus oryzae (strain ATCC 42149 / RIB 40) (Yellow koji mold) protein is Homoaconitase, mitochondrial (lys4).